The chain runs to 430 residues: Protein AST2 (430 aa).

Its function is as follows. Lipid raft-associated protein involved in the targeting of PMA1 from Golgi to the plasma membrane. May induce clustering of PMA1, which facilitates partition of PMA1 into lipid rafts after leaving the ER its and transport to the cell surface. The sequence is that of Protein AST2 from Saccharomyces cerevisiae (strain ATCC 204508 / S288c) (Baker's yeast).